Consider the following 129-residue polypeptide: Small ribosomal subunit protein uS13 (129 aa).

A disordered region spans residues 96 to 129 (GLPVRGQRTSTNARTRKGPRKTVGVSKAAAAAKA).

This sequence belongs to the universal ribosomal protein uS13 family. In terms of assembly, part of the 30S ribosomal subunit. Forms a loose heterodimer with protein S19. Forms two bridges to the 50S subunit in the 70S ribosome.

Its function is as follows. Located at the top of the head of the 30S subunit, it contacts several helices of the 16S rRNA. In the 70S ribosome it contacts the 23S rRNA (bridge B1a) and protein L5 of the 50S subunit (bridge B1b), connecting the 2 subunits; these bridges are implicated in subunit movement. Contacts the tRNAs in the A and P-sites. The polypeptide is Small ribosomal subunit protein uS13 (Opitutus terrae (strain DSM 11246 / JCM 15787 / PB90-1)).